The following is a 138-amino-acid chain: Transcription antitermination protein NusB (138 aa).

This sequence belongs to the NusB family.

Its function is as follows. Involved in transcription antitermination. Required for transcription of ribosomal RNA (rRNA) genes. Binds specifically to the boxA antiterminator sequence of the ribosomal RNA (rrn) operons. In Helicobacter pylori (strain J99 / ATCC 700824) (Campylobacter pylori J99), this protein is Transcription antitermination protein NusB.